The primary structure comprises 157 residues: Large ribosomal subunit protein uL15 (157 aa).

It belongs to the universal ribosomal protein uL15 family. As to quaternary structure, part of the 50S ribosomal subunit.

Its function is as follows. Binds to the 23S rRNA. The sequence is that of Large ribosomal subunit protein uL15 from Ehrlichia ruminantium (strain Welgevonden).